The following is a 949-amino-acid chain: Phosphocholine transferase AnkX (949 aa).

The region spanning 155 to 289 is the Fido domain; the sequence is LNPEQIPDLA…IFNTVEIIEQ (135 aa). ANK repeat units follow at residues 391–420, 424–453, 464–494, 498–527, 554–583, 588–617, 658–687, 691–720, 725–767, and 771–800; these read VGKTPAHLAVISGNMAMLDELIAKKADLSL, DGKTALHYAAECGNMQIMGKILKVVLSQED, HGKTAFHYAAEFGTPELISALTTTEVIQINE, SGSSAITLAYKNHKLKIFDELLNSGADISD, LNKEAFRIAISLGSVSLVKKFLRAGVDIDI, DKATPLMLSINSGNPKLVSYLLKKGANTRL, NGNPPLYNAVVVNDLKMATILLEMGARVDF, LGNNILHSAMRRCDLPIILDIVKKDSTLLH, ERRN…DLNK, and KGKTILDIALSKQYFHLCVKLMKAGAHTNI.

It is found in the secreted. It localises to the host cytoplasm. It catalyses the reaction [Rab1 protein]-L-serine + CDP-choline = [Rab1 protein]-O-phosphocholine-L-serine + CMP + H(+). In terms of biological role, virulence effector that plays a role in hijacking the host vesicular trafficking by recruiting the small guanosine triphosphatase (GTPase) Rab1 to the cytosolic face of the Legionella-containing vacuole (LCVs). Acts as a phosphocholine transferase by mediating the addition of phosphocholine to Ser residues of host RAB1 (RAB1A, RAB1B or RAB1C) and RAB35, leading to displacement of GDP dissociation inhibitors (GDI). Phosphocholination of target proteins also impairs accessibility to GTPase effector LepB. Can act on both GDP-bound and GTP-bound Rab proteins. In Legionella pneumophila subsp. pneumophila (strain Philadelphia 1 / ATCC 33152 / DSM 7513), this protein is Phosphocholine transferase AnkX (ankX).